Consider the following 85-residue polypeptide: MKQYIFFLALIVLVSTFAEAGKKTEILDKVKKVFSKGIAGVADLNNMSELGCPFIEKWCEDHCESKKQVGKCENFDCSCVKLGGK.

The N-terminal stretch at 1–20 (MKQYIFFLALIVLVSTFAEA) is a signal peptide. A propeptide spanning residues 21–37 (GKKTEILDKVKKVFSKG) is cleaved from the precursor. In terms of domain architecture, BetaSPN-type CS-alpha/beta spans 49–85 (ELGCPFIEKWCEDHCESKKQVGKCENFDCSCVKLGGK). Disulfide bonds link cysteine 52–cysteine 72, cysteine 59–cysteine 77, and cysteine 63–cysteine 79.

The protein belongs to the long chain scorpion toxin family. Class 2 subfamily. In terms of tissue distribution, expressed by the venom gland.

It is found in the secreted. Has a very weak effect to block voltage-gated potassium channel Kv1.1/KCNA1. The protein is Neurotoxin beta-KTx 17 of Lychas mucronatus (Chinese swimming scorpion).